We begin with the raw amino-acid sequence, 292 residues long: Tubulin beta chain (292 aa).

Positions 49 and 71 each coordinate GTP. The disordered stretch occupies residues 265 to 292; that stretch reads SEYQQYQDATAEEEGEFDEEEEGDEEAA. Residues 274–292 are compositionally biased toward acidic residues; it reads TAEEEGEFDEEEEGDEEAA.

The protein belongs to the tubulin family. In terms of assembly, dimer of alpha and beta chains. A typical microtubule is a hollow water-filled tube with an outer diameter of 25 nm and an inner diameter of 15 nM. Alpha-beta heterodimers associate head-to-tail to form protofilaments running lengthwise along the microtubule wall with the beta-tubulin subunit facing the microtubule plus end conferring a structural polarity. Microtubules usually have 13 protofilaments but different protofilament numbers can be found in some organisms and specialized cells. Mg(2+) is required as a cofactor.

The protein localises to the cytoplasm. It is found in the cytoskeleton. In terms of biological role, tubulin is the major constituent of microtubules, a cylinder consisting of laterally associated linear protofilaments composed of alpha- and beta-tubulin heterodimers. Microtubules grow by the addition of GTP-tubulin dimers to the microtubule end, where a stabilizing cap forms. Below the cap, tubulin dimers are in GDP-bound state, owing to GTPase activity of alpha-tubulin. The chain is Tubulin beta chain from Strongylocentrotus purpuratus (Purple sea urchin).